A 375-amino-acid polypeptide reads, in one-letter code: Probable aspartate aminotransferase (375 aa).

L-aspartate is bound by residues glycine 31 and asparagine 165. An N6-(pyridoxal phosphate)lysine modification is found at lysine 223. Arginine 353 serves as a coordination point for L-aspartate.

It belongs to the class-I pyridoxal-phosphate-dependent aminotransferase family. As to quaternary structure, homodimer. The cofactor is pyridoxal 5'-phosphate.

It is found in the cytoplasm. It carries out the reaction L-aspartate + 2-oxoglutarate = oxaloacetate + L-glutamate. This chain is Probable aspartate aminotransferase, found in Methanocaldococcus jannaschii (strain ATCC 43067 / DSM 2661 / JAL-1 / JCM 10045 / NBRC 100440) (Methanococcus jannaschii).